We begin with the raw amino-acid sequence, 37 residues long: Photosystem II reaction center protein T (37 aa).

A helical transmembrane segment spans residues 3–23 (ALVYTFLLVSTLGIIFFAIFF).

Belongs to the PsbT family. As to quaternary structure, PSII is composed of 1 copy each of membrane proteins PsbA, PsbB, PsbC, PsbD, PsbE, PsbF, PsbH, PsbI, PsbJ, PsbK, PsbL, PsbM, PsbT, PsbY, PsbZ, Psb30/Ycf12, at least 3 peripheral proteins of the oxygen-evolving complex and a large number of cofactors. It forms dimeric complexes.

It is found in the plastid. The protein localises to the chloroplast thylakoid membrane. Its function is as follows. Found at the monomer-monomer interface of the photosystem II (PS II) dimer, plays a role in assembly and dimerization of PSII. PSII is a light-driven water plastoquinone oxidoreductase, using light energy to abstract electrons from H(2)O, generating a proton gradient subsequently used for ATP formation. The chain is Photosystem II reaction center protein T from Cucumis sativus (Cucumber).